Reading from the N-terminus, the 212-residue chain is Octanoyltransferase (212 aa).

The BPL/LPL catalytic domain occupies 30–205 (ETTVDELWCL…ELVEGLGHSQ (176 aa)). Substrate contacts are provided by residues 69-76 (RGGQVTYH), 136-138 (SLG), and 149-151 (GLA). Catalysis depends on cysteine 167, which acts as the Acyl-thioester intermediate.

This sequence belongs to the LipB family.

It is found in the cytoplasm. The enzyme catalyses octanoyl-[ACP] + L-lysyl-[protein] = N(6)-octanoyl-L-lysyl-[protein] + holo-[ACP] + H(+). It participates in protein modification; protein lipoylation via endogenous pathway; protein N(6)-(lipoyl)lysine from octanoyl-[acyl-carrier-protein]: step 1/2. In terms of biological role, catalyzes the transfer of endogenously produced octanoic acid from octanoyl-acyl-carrier-protein onto the lipoyl domains of lipoate-dependent enzymes. Lipoyl-ACP can also act as a substrate although octanoyl-ACP is likely to be the physiological substrate. The protein is Octanoyltransferase of Marinobacter nauticus (strain ATCC 700491 / DSM 11845 / VT8) (Marinobacter aquaeolei).